We begin with the raw amino-acid sequence, 141 residues long: Plasmatocyte-spreading peptide (141 aa).

Positions 1-22 are cleaved as a signal peptide; the sequence is MKLTINILFCLILISQYNSANG. A propeptide spanning residues 23–118 is cleaved from the precursor; it reads NLRDLFNNVR…ATGGKDDKGR (96 aa). A compositionally biased stretch (basic and acidic residues) spans 46-58; sequence VKTLFHPSDKSGN. The disordered stretch occupies residues 46–118; sequence VKTLFHPSDK…ATGGKDDKGR (73 aa). Over residues 83 to 98 the composition is skewed to low complexity; it reads PVAVTPAPVVSTTTQA. Over residues 99–108 the composition is skewed to polar residues; sequence SAPTVATNGT. C125 and C137 are joined by a disulfide.

The protein belongs to the GBP/PSP1/paralytic peptide family.

Its function is as follows. Mediates the spreading of plasmatocytes to foreign surfaces. Plasmocytes are a class of hemocytes involved in insect cellular immunity. The chain is Plasmatocyte-spreading peptide (PSP1) from Chrysodeixis includens (Soybean looper).